The primary structure comprises 571 residues: Glutamate--tRNA ligase (571 aa).

The 'HIGH' region signature appears at 110–120 (PNPNGPATLGS).

This sequence belongs to the class-I aminoacyl-tRNA synthetase family. Glutamate--tRNA ligase type 2 subfamily.

The protein localises to the cytoplasm. The catalysed reaction is tRNA(Glu) + L-glutamate + ATP = L-glutamyl-tRNA(Glu) + AMP + diphosphate. Its function is as follows. Catalyzes the attachment of glutamate to tRNA(Glu) in a two-step reaction: glutamate is first activated by ATP to form Glu-AMP and then transferred to the acceptor end of tRNA(Glu). This chain is Glutamate--tRNA ligase, found in Methanosarcina barkeri (strain Fusaro / DSM 804).